The chain runs to 215 residues: Pyrrolidone-carboxylate peptidase (215 aa).

Catalysis depends on residues Glu-81, Cys-144, and His-168.

It belongs to the peptidase C15 family. In terms of assembly, homotetramer.

It localises to the cytoplasm. The enzyme catalyses Release of an N-terminal pyroglutamyl group from a polypeptide, the second amino acid generally not being Pro.. In terms of biological role, removes 5-oxoproline from various penultimate amino acid residues except L-proline. The sequence is that of Pyrrolidone-carboxylate peptidase (pcp) from Bacillus amyloliquefaciens (Bacillus velezensis).